The following is a 404-amino-acid chain: Pyruvate-flavodoxin oxidoreductase (404 aa).

Belongs to the pyruvate:ferredoxin/flavodoxin oxidoreductase family.

It catalyses the reaction oxidized [flavodoxin] + pyruvate + CoA + 2 H(+) = reduced [flavodoxin] + acetyl-CoA + CO2. Its function is as follows. Oxidoreductase required for the transfer of electrons from pyruvate to flavodoxin, which reduces nitrogenase. The protein is Pyruvate-flavodoxin oxidoreductase (nifJ) of Nostoc sp. (strain ATCC 29151 / PCC 7119) (Anabaena sp.).